Consider the following 365-residue polypeptide: GTPase Obg (365 aa).

Residues 1-159 enclose the Obg domain; that stretch reads MKFIDEARIE…RMLKLELKVL (159 aa). An OBG-type G domain is found at 160-334; that stretch reads ADVGLLGMPN…LVYAIKDHLA (175 aa). Residues 166–173, 191–195, 213–216, 284–287, and 315–317 contribute to the GTP site; these read GMPNAGKS, FTTLH, DIPG, NKLD, and SAL. 2 residues coordinate Mg(2+): S173 and T193.

Belongs to the TRAFAC class OBG-HflX-like GTPase superfamily. OBG GTPase family. In terms of assembly, monomer. Mg(2+) is required as a cofactor.

Its subcellular location is the cytoplasm. In terms of biological role, an essential GTPase which binds GTP, GDP and possibly (p)ppGpp with moderate affinity, with high nucleotide exchange rates and a fairly low GTP hydrolysis rate. Plays a role in control of the cell cycle, stress response, ribosome biogenesis and in those bacteria that undergo differentiation, in morphogenesis control. The polypeptide is GTPase Obg (Cupriavidus metallidurans (strain ATCC 43123 / DSM 2839 / NBRC 102507 / CH34) (Ralstonia metallidurans)).